A 686-amino-acid polypeptide reads, in one-letter code: Leucine-rich repeat-containing protein 49 (686 aa).

LRR repeat units lie at residues 113-134, 135-156, 157-178, 179-200, 201-222, 223-244, and 245-266; these read HLRLLNFQHNFITRIQNISNLQ, RLIFLDLYDNQIEEISGLSTLK, SLRVLLLGKNRIKKISNLENLK, NLDVLDLHGNQITKIENVNHLC, DLRVLNLARNLLSHVDNLNGLD, SLTELNLRHNQITFVRDVDNLP, and CLQRLFLSFNNITSFESVSCLA. The LRRCT domain occupies 279–317; that stretch reads NPIAQESWYKHTVLQNMMQLRQLDMKRITEEERRVASVV. Disordered stretches follow at residues 311-332 and 359-381; these read RRVASVVPKKEEEKKRESHKQS and ASTQDRKDSESPPQESCQLDGGN. A coiled-coil region spans residues 319–341; that stretch reads KKEEEKKRESHKQSLLKEKKRLT.

In terms of assembly, part of the neuronal tubulin polyglutamylase complex which contains TPGS1, TPGS2, TTLL1, LRRC49 and NICN1. Interacts with PCM1; TTLL1, TPGS1, TPGS2 and LRRC49.

The protein localises to the cytoplasm. Its subcellular location is the cytoskeleton. It is found in the microtubule organizing center. It localises to the centrosome. The protein resides in the centriolar satellite. Subunit of the tubulin polyglutamylase complex (TPGC). The complex mediates cilia and flagella polyglutamylation which is essential for their biogenesis and motility. This Mus musculus (Mouse) protein is Leucine-rich repeat-containing protein 49 (Lrrc49).